The chain runs to 121 residues: Large ribosomal subunit protein uL14 (121 aa).

It belongs to the universal ribosomal protein uL14 family. In terms of assembly, part of the 50S ribosomal subunit. Forms a cluster with proteins L3 and L19. In the 70S ribosome, L14 and L19 interact and together make contacts with the 16S rRNA in bridges B5 and B8.

Binds to 23S rRNA. Forms part of two intersubunit bridges in the 70S ribosome. The chain is Large ribosomal subunit protein uL14 from Legionella pneumophila (strain Corby).